The sequence spans 333 residues: Ketol-acid reductoisomerase (NADP(+)) (333 aa).

Positions 2–182 constitute a KARI N-terminal Rossmann domain; the sequence is AKMYYDSDAS…GCTRAGVLET (181 aa). NADP(+) contacts are provided by residues 25-28, R48, S51, and 83-86; these read YGSQ and DERQ. Residue H108 is part of the active site. Position 134 (G134) interacts with NADP(+). One can recognise a KARI C-terminal knotted domain in the interval 183–328; that stretch reads TFKEETETDL…AELRAMMPFI (146 aa). Residues D191, E195, E227, and E231 each contribute to the Mg(2+) site. Position 252 (S252) interacts with substrate.

It belongs to the ketol-acid reductoisomerase family. The cofactor is Mg(2+).

The catalysed reaction is (2R)-2,3-dihydroxy-3-methylbutanoate + NADP(+) = (2S)-2-acetolactate + NADPH + H(+). It carries out the reaction (2R,3R)-2,3-dihydroxy-3-methylpentanoate + NADP(+) = (S)-2-ethyl-2-hydroxy-3-oxobutanoate + NADPH + H(+). It participates in amino-acid biosynthesis; L-isoleucine biosynthesis; L-isoleucine from 2-oxobutanoate: step 2/4. It functions in the pathway amino-acid biosynthesis; L-valine biosynthesis; L-valine from pyruvate: step 2/4. Its function is as follows. Involved in the biosynthesis of branched-chain amino acids (BCAA). Catalyzes an alkyl-migration followed by a ketol-acid reduction of (S)-2-acetolactate (S2AL) to yield (R)-2,3-dihydroxy-isovalerate. In the isomerase reaction, S2AL is rearranged via a Mg-dependent methyl migration to produce 3-hydroxy-3-methyl-2-ketobutyrate (HMKB). In the reductase reaction, this 2-ketoacid undergoes a metal-dependent reduction by NADPH to yield (R)-2,3-dihydroxy-isovalerate. In Desulfitobacterium hafniense (strain DSM 10664 / DCB-2), this protein is Ketol-acid reductoisomerase (NADP(+)).